The chain runs to 400 residues: uncharacterized protein (400 aa).

Residues 112 to 126 are compositionally biased toward basic and acidic residues; it reads SESTAQIEKKPRKPL. The tract at residues 112–151 is disordered; it reads SESTAQIEKKPRKPLDSVGLLEGDRNKRKKSPQMNDFNIK.

This is an uncharacterized protein from Homo sapiens (Human).